A 144-amino-acid polypeptide reads, in one-letter code: Ferredoxin-thioredoxin reductase catalytic chain, chloroplastic (144 aa).

Residues 1–31 (MKALQASIAYSFPISSPAASPRRFSRVIRAQ) constitute a chloroplast transit peptide. Residue Cys83 participates in [4Fe-4S] cluster binding. The active-site Nucleophile is the Cys85. An intrachain disulfide couples Cys85 to Cys115. [4Fe-4S] cluster contacts are provided by Cys102, Cys104, and Cys113.

Belongs to the ferredoxin thioredoxin reductase beta subunit family. Heterodimer of subunit A (variable subunit) and subunit B (catalytic subunit). Heterodimeric FTR forms a complex with ferredoxin and thioredoxin. Requires [4Fe-4S] cluster as cofactor.

It is found in the plastid. The protein resides in the chloroplast. It catalyses the reaction [thioredoxin]-disulfide + 2 reduced [2Fe-2S]-[ferredoxin] + 2 H(+) = [thioredoxin]-dithiol + 2 oxidized [2Fe-2S]-[ferredoxin]. Its function is as follows. Catalytic subunit of the ferredoxin-thioredoxin reductase (FTR), which catalyzes the two-electron reduction of thioredoxins by the electrons provided by reduced ferredoxin. This is Ferredoxin-thioredoxin reductase catalytic chain, chloroplastic (FTRC) from Spinacia oleracea (Spinach).